We begin with the raw amino-acid sequence, 465 residues long: Nucleolar and spindle-associated protein 1 (465 aa).

A coiled-coil region spans residues 32–61 (ADKLLRALKAHLKNEARKENENQDEIQTSA). 3 disordered regions span residues 44-123 (KNEA…QNHS), 148-207 (VEVP…TPNF), and 252-294 (GVPA…GSAK). The span at 56-75 (EIQTSASSCDEPEIQTSSQE) shows a compositional bias: polar residues. Residues 76-86 (QAEREPDDHVT) show a composition bias toward basic and acidic residues. Residues 87-96 (KTRGRRKTVH) are compositionally biased toward basic residues. The residue at position 152 (Ser152) is a Phosphoserine. Residues 154–166 (PNESQGDENTVSS) are compositionally biased toward polar residues. Residues 169–179 (HGIDGNEDPRV) are compositionally biased toward basic and acidic residues. Position 204 is a phosphothreonine (Thr204). The tract at residues 262–405 (GRLSVACTPG…HKGKLKPWGQ (144 aa)) is interaction with microtubules. Ser265 bears the Phosphoserine mark. The residue at position 269 (Thr269) is a Phosphothreonine. Phosphoserine occurs at positions 272, 292, 299, and 334. Residues 308–338 (SAATKDNEHKRSLTKTPARKSPHVTTSVNTP) form a disordered region. A phosphothreonine mark is found at Thr337, Thr361, and Thr372. Phosphoserine is present on residues Ser375 and Ser386. The segment at 396 to 454 (HKGKLKPWGQSKENNSLHEHVNRVSFHKKTYKQPRLQTREEQRKKHERERKEKKEKVLG) is disordered. Residues 407–413 (KENNSLH) carry the KEN box motif. Positions 430–457 (RLQTREEQRKKHERERKEKKEKVLGVRR) form a coiled coil. Basic and acidic residues predominate over residues 432–453 (QTREEQRKKHERERKEKKEKVL).

The protein belongs to the NUSAP family. As to quaternary structure, interacts with DNA and microtubules. Microtubule bundling is inhibited by IPO7, KPNA2 and KPNB1 while association with DNA is also inhibited by IPO7 and KPNA2. Post-translationally, ubiquitinated. Ubiquitination by FZR1 may lead to proteasome-dependent degradation of this protein.

Its subcellular location is the cytoplasm. The protein resides in the nucleus. The protein localises to the nucleolus. It localises to the cytoskeleton. It is found in the spindle. Its subcellular location is the chromosome. Its function is as follows. Microtubule-associated protein with the capacity to bundle and stabilize microtubules. May associate with chromosomes and promote the organization of mitotic spindle microtubules around them. This chain is Nucleolar and spindle-associated protein 1 (NUSAP1), found in Bos taurus (Bovine).